The following is a 92-amino-acid chain: 10 kDa late embryogenesis abundant protein (92 aa).

Residues Met1–Arg10 show a composition bias toward polar residues. The tract at residues Met1–Asp92 is disordered. 2 stretches are compositionally biased toward basic and acidic residues: residues Lys11–Lys26 and Lys38–Lys71.

Belongs to the small hydrophilic plant seed protein family. In terms of tissue distribution, maximally expressed in dry seeds. Also present in mid-maturation embryos.

LEA proteins are late embryonic proteins abundant in higher plant seed embryos. They may play an essential role in seed survival and in controlling water exchanges during seed desiccation and imbibition. In Helianthus annuus (Common sunflower), this protein is 10 kDa late embryogenesis abundant protein.